A 472-amino-acid chain; its full sequence is Forkhead box protein H1 (472 aa).

The disordered stretch occupies residues 36 to 56 (SSKRSCHRSSNPLLELGGRLD). Residues 97-193 (KPPYSYLAMI…LKRQNTAVSR (97 aa)) constitute a DNA-binding region (fork-head). 2 disordered regions span residues 211 to 246 (YSQP…RPKL) and 261 to 360 (PASS…LPTS). A compositionally biased stretch (pro residues) spans 219–239 (PLPPESSLPPVPTRQSPPPSE). Low complexity predominate over residues 294-310 (ASYNGSSSASSVSPASD). The segment at 339 to 465 (SCPPPNKSSK…PNQYALQNGP (127 aa)) is SMAD-interaction domain (SID). The Fast/FoxH1 motif 1 (FM1) motif lies at 357 to 361 (LPTSY). The short motif at 367–373 (PNAVAPP) is the Fast/FoxH1 motif 2 (FM2) element. Residues 428–448 (LDSMLQSVPPNKSVFDALGSN) carry the SMAD interaction motif (SIM) motif.

The protein localises to the nucleus. Transcriptional activator. Activates an activin response element (ARE). Recognizes and binds to the DNA sequence 5'-TGT[GT][GT]ATT-3'. Modulator of nodal signaling required for organizer formation. Also required for the development of dorsal axial structures and left-right symmetry. The chain is Forkhead box protein H1 (foxh1) from Danio rerio (Zebrafish).